The chain runs to 877 residues: Alanine--tRNA ligase (877 aa).

Positions 567, 571, 669, and 673 each coordinate Zn(2+).

This sequence belongs to the class-II aminoacyl-tRNA synthetase family. Requires Zn(2+) as cofactor.

It localises to the cytoplasm. It catalyses the reaction tRNA(Ala) + L-alanine + ATP = L-alanyl-tRNA(Ala) + AMP + diphosphate. In terms of biological role, catalyzes the attachment of alanine to tRNA(Ala) in a two-step reaction: alanine is first activated by ATP to form Ala-AMP and then transferred to the acceptor end of tRNA(Ala). Also edits incorrectly charged Ser-tRNA(Ala) and Gly-tRNA(Ala) via its editing domain. The sequence is that of Alanine--tRNA ligase from Rickettsia rickettsii (strain Iowa).